Consider the following 217-residue polypeptide: Ras-related protein RABA5b (217 aa).

A GTP-binding site is contributed by 19–26 (GDSAVGKS). The Effector region signature appears at 41 to 49 (SKATIGVEF). Residues 67–71 (DTAGQ), 125–128 (NKCD), and 155–156 (SA) each bind GTP. 2 S-geranylgeranyl cysteine lipidation sites follow: Cys-214 and Cys-215.

It belongs to the small GTPase superfamily. Rab family.

It is found in the cell membrane. Functionally, intracellular vesicle trafficking and protein transport. In Arabidopsis thaliana (Mouse-ear cress), this protein is Ras-related protein RABA5b (RABA5B).